A 591-amino-acid chain; its full sequence is Aspartate--tRNA ligase (591 aa).

Glu-173 is an L-aspartate binding site. The segment at 197–200 (QLFK) is aspartate. L-aspartate is bound at residue Arg-219. Residues 219–221 (RDE) and Gln-228 contribute to the ATP site. His-448 is a binding site for L-aspartate. Glu-482 contributes to the ATP binding site. Arg-489 provides a ligand contact to L-aspartate. Residue 534–537 (GLDR) coordinates ATP.

Belongs to the class-II aminoacyl-tRNA synthetase family. Type 1 subfamily. As to quaternary structure, homodimer.

It is found in the cytoplasm. It catalyses the reaction tRNA(Asp) + L-aspartate + ATP = L-aspartyl-tRNA(Asp) + AMP + diphosphate. Catalyzes the attachment of L-aspartate to tRNA(Asp) in a two-step reaction: L-aspartate is first activated by ATP to form Asp-AMP and then transferred to the acceptor end of tRNA(Asp). This is Aspartate--tRNA ligase from Shewanella sp. (strain MR-4).